Here is a 570-residue protein sequence, read N- to C-terminus: Putative ABC transporter ATP-binding protein SAR2766 (570 aa).

ABC transporter domains follow at residues 6–247 (ISFK…GIRE) and 304–537 (LELN…ASLR). Residues 40-47 (GASGSGKS) and 338-345 (GHNGAGKS) each bind ATP.

It belongs to the ABC transporter superfamily.

It localises to the cell membrane. Probably part of an ABC transporter complex. Responsible for energy coupling to the transport system. This chain is Putative ABC transporter ATP-binding protein SAR2766, found in Staphylococcus aureus (strain MRSA252).